The primary structure comprises 1042 residues: Ubiquitin carboxyl-terminal hydrolase 38 (1042 aa).

Residues Thr445 to Gln949 form the USP domain. Catalysis depends on Cys454, which acts as the Nucleophile. The active-site Proton acceptor is the His857.

It belongs to the peptidase C19 family. In terms of assembly, interacts with isoform 1 of FBXW7; this interaction prevents FBXW7-mediated degradation of MYC.

The protein resides in the cytoplasm. It localises to the nucleus. The enzyme catalyses Thiol-dependent hydrolysis of ester, thioester, amide, peptide and isopeptide bonds formed by the C-terminal Gly of ubiquitin (a 76-residue protein attached to proteins as an intracellular targeting signal).. In terms of biological role, deubiquitinating enzyme that plays a role in various cellular processes, including DNA repair, cell cycle regulation, and immune response. Plays a role in the inhibition of type I interferon signaling by mediating the 'Lys-33' to 'Lys-48' ubiquitination transition of TBK1 leading to its degradation. Cleaves the ubiquitin chain from the histone demethylase LSD1/KDM1A and prevents it from degradation by the 26S proteasome, thus maintaining LSD1 protein level in cells. Plays a role in the DNA damage response by regulating the deacetylase activity of HDAC1. Mechanistically, removes the 'Lys-63'-linked ubiquitin chain promoting the deacetylase activity of HDAC1 in response to DNA damage. Also acts as a specific deubiquitinase of histone deacetylase 3/HDAC3 and cleaves its 'Lys-63'-linked ubiquitin chains to lower its histone deacetylase activity. Regulates MYC levels and cell proliferation via antagonizing ubiquitin E3 ligase FBXW7 thereby preventing MYC 'Lys-48'-linked ubiquitination and degradation. Participates in antiviral response by removing both 'Lys-48'-linked and 'Lys-63'-linked polyubiquitination of Zika virus envelope protein E. Constitutively associated with IL-33R/IL1RL1, deconjugates its 'Lys-27'-linked polyubiquitination resulting in its autophagic degradation. The polypeptide is Ubiquitin carboxyl-terminal hydrolase 38 (Usp38) (Mus musculus (Mouse)).